Here is a 428-residue protein sequence, read N- to C-terminus: MTHTRSHTLFDQARRIIPGGVNSPVRAFKSVGADPLFIKRASGSKIFDEDNNTYIDYVGSWGPMILGHCFPEVVNAVKQCMENGSSFGAPTELEITLAQMVIDAMPSIEMVRMVSSGTEATMSAIRLARGYTGRDKILKFSGCYHGHADALLVKAGSGAATFGVPDSPGVPADFAKHTLTAEYNSLASVKTLITENSGQIACIILEPVAGNMGTVPPRPGFLEGLRELCTNEGIILIFDEVMSGFRVAYGGAQSLYGVTPDMTTLGKIIGGGLPVGAFGGKREIMEKLSPSGGVYQAGTLSGNPLAMTAGIETLKFLQQPGFYDRLEEKSSQLSEGISLAARDAGYPLYSTRVGSMFCAFFTPHEVFDWTTAAACDTKAFARYFLAMLEEGVYLAPSQFETAFMSAAHSQQDIEATIAAARKCFKLIR.

At Lys-267 the chain carries N6-(pyridoxal phosphate)lysine.

The protein belongs to the class-III pyridoxal-phosphate-dependent aminotransferase family. HemL subfamily. Homodimer. Pyridoxal 5'-phosphate is required as a cofactor.

It localises to the cytoplasm. It catalyses the reaction (S)-4-amino-5-oxopentanoate = 5-aminolevulinate. It functions in the pathway porphyrin-containing compound metabolism; protoporphyrin-IX biosynthesis; 5-aminolevulinate from L-glutamyl-tRNA(Glu): step 2/2. The sequence is that of Glutamate-1-semialdehyde 2,1-aminomutase from Trichlorobacter lovleyi (strain ATCC BAA-1151 / DSM 17278 / SZ) (Geobacter lovleyi).